Consider the following 310-residue polypeptide: Olfactory receptor 2A4 (310 aa).

The Extracellular segment spans residues 1–24 (MGDNITSIREFLLLGFPVGPRIQM). Asparagine 4 carries an N-linked (GlcNAc...) asparagine glycan. The chain crosses the membrane as a helical span at residues 25 to 48 (LLFGLFSLFYVFTLLGNGTILGLI). Topologically, residues 49–56 (SLDSRLHA) are cytoplasmic. Residues 57–78 (PMYFFLSHLAVVDIAYACNTVP) form a helical membrane-spanning segment. Over 79–99 (RMLVNLLHPAKPISFAGRMMQ) the chain is Extracellular. Residues 100 to 119 (TFLFSTFAVTECLLLVVMSY) form a helical membrane-spanning segment. Topologically, residues 120–138 (DLYVAICHPLRYLAIMTWR) are cytoplasmic. Residues 139–157 (VCITLAVTSWTTGVLLSLI) form a helical membrane-spanning segment. The Extracellular portion of the chain corresponds to 158–194 (HLVLLLPLPFCRPQKIYHFFCEILAVLKLACADTHIN). Residues 195–218 (ENMVLAGAISGLVGPLSTIVVSYM) form a helical membrane-spanning segment. Residues 219-235 (CILCAILQIQSREVQRK) lie on the Cytoplasmic side of the membrane. The helical transmembrane segment at 236–258 (AFRTCFSHLCVIGLVYGTAIIMY) threads the bilayer. The Extracellular segment spans residues 259–271 (VGPRYGNPKEQKK). A helical transmembrane segment spans residues 272–291 (YLLLFHSLFNPMLNPLICSL). The Cytoplasmic portion of the chain corresponds to 292–310 (RNSEVKNTLKRVLGVERAL).

This sequence belongs to the G-protein coupled receptor 1 family.

It localises to the cell membrane. Functionally, odorant receptor. This is Olfactory receptor 2A4 (OR2A4) from Homo sapiens (Human).